The following is a 177-amino-acid chain: Probable prophage lysozyme (177 aa).

The active-site Proton donor is the Glu-35. Catalysis depends on Asp-44, which acts as the Nucleophile.

It belongs to the glycosyl hydrolase 24 family.

It carries out the reaction Hydrolysis of (1-&gt;4)-beta-linkages between N-acetylmuramic acid and N-acetyl-D-glucosamine residues in a peptidoglycan and between N-acetyl-D-glucosamine residues in chitodextrins.. Its function is as follows. Essential for lysis of bacterial cell wall, by showing cell wall hydrolyzing activity. In Escherichia coli (strain K12), this protein is Probable prophage lysozyme (rrrQ).